A 174-amino-acid polypeptide reads, in one-letter code: Dehydratase AgnL8 (174 aa).

Tyr24, Tyr44, and Phe47 together coordinate substrate. Residues His79 and His104 contribute to the active site.

The protein belongs to the scytalone dehydratase family. Homotrimer. Each subunit contains an active site, located in the central part of the hydrophobic core of the monomer, which functions independently.

The protein operates within secondary metabolite biosynthesis. Functionally, dehydratase; part of the gene cluster that mediates the biosynthesis of agnestins, dihydroxy-xanthone metabolites. The pathway begins with the assembly and cyclization of atrochrysone thioester by the non-reducing polyketide synthase Agnpks1. The atrochrysone carboxyl ACP thioesterase AgnL7 then breaks the thioester bond and releases the atrochrysone carboxylic acid as the first enzyme-free intermediate. The decarboxylase AgnL1 then catalyzes the concerted decarboxylation-elimination required to convert atochrysone carboxylic acid into emodin anthrone, which is further oxidized to emodin by the anthrone oxygenase AgnL2. Emodin then undergoes reduction catalyzed by the oxidoreductase AgnL4 to yield the dihydroquinone tautomer which is the substrate for reduction by the short chain dehydrogenase AgnL6 reduction to produce hydroxyketone, followed by AgnL8 dehydration and likely spontaneous autoxidation to chrysophanol. Baeyer-Villiger oxidation by the oxidase AgnL3 leads to monodictyphenone via cleavage of the C-10/C-10a bond of chrysophanol. Alternative cleavage at the C-4a/C-10 bond of chrysophanol also leads to the formation some cephalone F. Further conversion to agnestins A and B, requires reduction to dihydro-monodictyphenone, oxidation to agnestin C probably via an epoxide, and rearrangement to either agnestin A or agnestin B directly, although agnestin A or agnestin B can also interconvert. Within the cluster, AgnR1 is the only unassigned oxidoreductase present which could be involved in this conversion. However, AgnR1 seems not to be involved in this step, and thus genes involved in the proposed oxidation/reduction may be located elsewhere on the genome. Further agnestin A derivatives are probably formed by spontaneous decarboxylations, dehydrations and methanolysis reactions. This chain is Dehydratase AgnL8, found in Paecilomyces divaricatus (Penicillium divaricatum).